A 115-amino-acid polypeptide reads, in one-letter code: Large ribosomal subunit protein uL24 (115 aa).

It belongs to the universal ribosomal protein uL24 family. In terms of assembly, part of the 50S ribosomal subunit.

One of two assembly initiator proteins, it binds directly to the 5'-end of the 23S rRNA, where it nucleates assembly of the 50S subunit. Its function is as follows. One of the proteins that surrounds the polypeptide exit tunnel on the outside of the subunit. The chain is Large ribosomal subunit protein uL24 from Beutenbergia cavernae (strain ATCC BAA-8 / DSM 12333 / CCUG 43141 / JCM 11478 / NBRC 16432 / NCIMB 13614 / HKI 0122).